A 416-amino-acid polypeptide reads, in one-letter code: Enterobactin exporter EntS (416 aa).

Over 1–21 (MNKQSWLLNLSLLKTHPAFRA) the chain is Cytoplasmic. The chain crosses the membrane as a helical span at residues 22–42 (VFLARFISIVSLGLLGVAVPV). The Periplasmic segment spans residues 43–55 (QIQMMTHSTWQVG). Residues 56–76 (LSVTLTGGAMFVGLMVGGVLA) form a helical membrane-spanning segment. Over 77 to 83 (DRYERKK) the chain is Cytoplasmic. Residues 84–104 (VILLARGTCGIGFIGLCLNAL) form a helical membrane-spanning segment. Topologically, residues 105-109 (LPEPS) are periplasmic. A helical membrane pass occupies residues 110 to 130 (LLAIYLLGLWDGFFASLGVTA). Topologically, residues 131–156 (LLAATPALVGRENLMQAGAITMLTVR) are cytoplasmic. A helical transmembrane segment spans residues 157 to 177 (LGSVISPMIGGLLLATGGVAW). Position 178 (N178) is a topological domain, periplasmic. The helical transmembrane segment at 179 to 199 (YGLAAAGTFITLLPLLSLPAL) threads the bilayer. The Cytoplasmic portion of the chain corresponds to 200-218 (PPPPQPREHPLKSLLAGFR). A helical membrane pass occupies residues 219–239 (FLLASPLVGGIALLGGLLTMA). Topologically, residues 240-256 (SAVRVLYPALADNWQMS) are periplasmic. The chain crosses the membrane as a helical span at residues 257–277 (AAQIGFLYAAIPLGAAIGALT). The Cytoplasmic portion of the chain corresponds to 278–287 (SGKLAHSARP). A helical transmembrane segment spans residues 288 to 307 (GLLMLLSTLGSFLAIGLFGL). At 308–313 (MPMWIL) the chain is on the periplasmic side. Residues 314-336 (GVVCLALFGWLSAVSSLLQYTML) form a helical membrane-spanning segment. The Cytoplasmic segment spans residues 337–356 (QTQTPEAMLGRINGLWTAQN). The chain crosses the membrane as a helical span at residues 357–377 (VTGDAIGAALLGGLGAMMTPV). Position 378 (A378) is a topological domain, periplasmic. The helical transmembrane segment at 379 to 399 (SASASGFGLLIIGVLLLLVLV) threads the bilayer. Over 400 to 416 (ELRRFRQTPPQVTASDG) the chain is Cytoplasmic.

This sequence belongs to the major facilitator superfamily. EntS (TC 2.A.1.38) family.

The protein resides in the cell inner membrane. In terms of biological role, component of an export pathway for enterobactin. The chain is Enterobactin exporter EntS from Escherichia coli O157:H7.